A 297-amino-acid chain; its full sequence is HTH-type transcriptional regulator ArgP (297 aa).

The HTH lysR-type domain maps to 4–60; that stretch reads PDYRTLQALDAVIRERGFERAAQKLCITQSAVSQRIKQLENLFGQPLLVRTVPPRPT. The H-T-H motif DNA-binding region spans 21–40; that stretch reads FERAAQKLCITQSAVSQRIK.

This sequence belongs to the LysR transcriptional regulatory family. In terms of assembly, homodimer.

In terms of biological role, controls the transcription of genes involved in arginine and lysine metabolism. This Yersinia enterocolitica serotype O:8 / biotype 1B (strain NCTC 13174 / 8081) protein is HTH-type transcriptional regulator ArgP.